A 439-amino-acid polypeptide reads, in one-letter code: Serine/threonine-protein kinase 2 (439 aa).

The Protein kinase domain maps to 87–439; that stretch reads NDDFYHISTG…IFSDWINGGN (353 aa). ATP is bound by residues 93-101 and K117; that span reads ISTGGYGIV. D307 serves as the catalytic Proton acceptor.

The protein belongs to the protein kinase superfamily. Ser/Thr protein kinase family. Poxviruses subfamily. In terms of processing, phosphorylated in vivo. Autophosphorylated in vitro.

Its subcellular location is the host endoplasmic reticulum. The protein resides in the host endoplasmic reticulum-Golgi intermediate compartment. It carries out the reaction L-seryl-[protein] + ATP = O-phospho-L-seryl-[protein] + ADP + H(+). The enzyme catalyses L-threonyl-[protein] + ATP = O-phospho-L-threonyl-[protein] + ADP + H(+). Functionally, essential serine-protein kinase involved in the early stage of virion morphogenesis. The protein is Serine/threonine-protein kinase 2 (OPG054) of Vaccinia virus (strain Copenhagen) (VACV).